The sequence spans 271 residues: Interleukin-1 alpha (271 aa).

A propeptide spanning residues 1–112 (MAKVPDMFED…DSEEEIIKPR (112 aa)) is cleaved from the precursor. Residue lysine 82 is modified to N6-acetyllysine. The nuclear localization signal (NLS) stretch occupies residues 82 to 86 (KKRRL). Position 87 is a phosphoserine (serine 87). N-linked (GlcNAc...) asparagine glycans are attached at residues asparagine 102, asparagine 121, asparagine 137, and asparagine 141.

This sequence belongs to the IL-1 family. In terms of assembly, monomer. Interacts with TMED10; the interaction mediates the translocation from the cytoplasm into the ERGIC (endoplasmic reticulum-Golgi intermediate compartment) and thereby secretion. Interacts with IL1R1. Interacts with S100A13; this interaction is the first step in the export of IL1A, followed by direct translocation of this complex across the plasma membrane. In terms of processing, acetylated within its nuclear localization sequence, which impacts subcellular localization. Proteolytic processed by CAPN1 in a calcium-dependent manner. Cleavage from 31 kDa precursor to 18 kDa biologically active molecules. Post-translationally, phosphorylated. Phosphorylation greatly enhances susceptibility to digestion and promotes the conversion of pre-IL1A alpha to the biologically active IL1A.

It is found in the nucleus. It localises to the cytoplasm. The protein resides in the secreted. Functionally, cytokine constitutively present intracellularly in nearly all resting non-hematopoietic cells that plays an important role in inflammation and bridges the innate and adaptive immune systems. After binding to its receptor IL1R1 together with its accessory protein IL1RAP, forms the high affinity interleukin-1 receptor complex. Signaling involves the recruitment of adapter molecules such as MYD88, IRAK1 or IRAK4. In turn, mediates the activation of NF-kappa-B and the three MAPK pathways p38, p42/p44 and JNK pathways. Within the cell, acts as an alarmin and cell death results in its liberation in the extracellular space after disruption of the cell membrane to induce inflammation and alert the host to injury or damage. In addition to its role as a danger signal, which occurs when the cytokine is passively released by cell necrosis, directly senses DNA damage and acts as signal for genotoxic stress without loss of cell integrity. The chain is Interleukin-1 alpha (IL1A) from Macaca fascicularis (Crab-eating macaque).